The chain runs to 401 residues: Nicotinate phosphoribosyltransferase (401 aa).

H221 carries the phosphohistidine; by autocatalysis modification.

It belongs to the NAPRTase family. In terms of processing, transiently phosphorylated on a His residue during the reaction cycle. Phosphorylation strongly increases the affinity for substrates and increases the rate of nicotinate D-ribonucleotide production. Dephosphorylation regenerates the low-affinity form of the enzyme, leading to product release.

It catalyses the reaction nicotinate + 5-phospho-alpha-D-ribose 1-diphosphate + ATP + H2O = nicotinate beta-D-ribonucleotide + ADP + phosphate + diphosphate. It functions in the pathway cofactor biosynthesis; NAD(+) biosynthesis; nicotinate D-ribonucleotide from nicotinate: step 1/1. Functionally, catalyzes the synthesis of beta-nicotinate D-ribonucleotide from nicotinate and 5-phospho-D-ribose 1-phosphate at the expense of ATP. This is Nicotinate phosphoribosyltransferase from Serratia proteamaculans (strain 568).